A 336-amino-acid chain; its full sequence is Holliday junction branch migration complex subunit RuvB (336 aa).

The segment at 4–184 (ADRLVSADSS…FGIVQRLEFY (181 aa)) is large ATPase domain (RuvB-L). Residues Ile-23, Arg-24, Gly-65, Lys-68, Thr-69, Thr-70, 131 to 133 (EDY), Arg-174, Tyr-184, and Arg-221 each bind ATP. Thr-69 contacts Mg(2+). Residues 185–255 (QIPDLQHIVS…IAAQALDMLN (71 aa)) form a small ATPAse domain (RuvB-S) region. The head domain (RuvB-H) stretch occupies residues 258 to 336 (AEGFDYMDRK…HFGITPPEMP (79 aa)). The DNA site is built by Arg-294, Arg-313, and Arg-318.

It belongs to the RuvB family. In terms of assembly, homohexamer. Forms an RuvA(8)-RuvB(12)-Holliday junction (HJ) complex. HJ DNA is sandwiched between 2 RuvA tetramers; dsDNA enters through RuvA and exits via RuvB. An RuvB hexamer assembles on each DNA strand where it exits the tetramer. Each RuvB hexamer is contacted by two RuvA subunits (via domain III) on 2 adjacent RuvB subunits; this complex drives branch migration. In the full resolvosome a probable DNA-RuvA(4)-RuvB(12)-RuvC(2) complex forms which resolves the HJ.

The protein localises to the cytoplasm. The catalysed reaction is ATP + H2O = ADP + phosphate + H(+). Functionally, the RuvA-RuvB-RuvC complex processes Holliday junction (HJ) DNA during genetic recombination and DNA repair, while the RuvA-RuvB complex plays an important role in the rescue of blocked DNA replication forks via replication fork reversal (RFR). RuvA specifically binds to HJ cruciform DNA, conferring on it an open structure. The RuvB hexamer acts as an ATP-dependent pump, pulling dsDNA into and through the RuvAB complex. RuvB forms 2 homohexamers on either side of HJ DNA bound by 1 or 2 RuvA tetramers; 4 subunits per hexamer contact DNA at a time. Coordinated motions by a converter formed by DNA-disengaged RuvB subunits stimulates ATP hydrolysis and nucleotide exchange. Immobilization of the converter enables RuvB to convert the ATP-contained energy into a lever motion, pulling 2 nucleotides of DNA out of the RuvA tetramer per ATP hydrolyzed, thus driving DNA branch migration. The RuvB motors rotate together with the DNA substrate, which together with the progressing nucleotide cycle form the mechanistic basis for DNA recombination by continuous HJ branch migration. Branch migration allows RuvC to scan DNA until it finds its consensus sequence, where it cleaves and resolves cruciform DNA. The protein is Holliday junction branch migration complex subunit RuvB of Klebsiella pneumoniae subsp. pneumoniae (strain ATCC 700721 / MGH 78578).